We begin with the raw amino-acid sequence, 153 residues long: NADH dehydrogenase [ubiquinone] 1 beta subcomplex subunit 11, mitochondrial (153 aa).

A mitochondrion-targeting transit peptide spans 1 to 29; sequence MAAGLFGLSARRLLAAAATRGLPAARVRW. The segment at 40–76 is disordered; sequence PSAVAGKRPPEPTTPWQEDPEPEDENLYEKNPDSHGY. Positions 66 to 76 are enriched in basic and acidic residues; that stretch reads LYEKNPDSHGY. Residues 89-109 form a helical membrane-spanning segment; sequence LVFFFGVSIILVLGSTFVAYL.

It belongs to the complex I NDUFB11 subunit family. In terms of assembly, complex I is composed of 45 different subunits. Interacts with BCAP31. As to expression, ubiquitous.

The protein resides in the mitochondrion inner membrane. In terms of biological role, accessory subunit of the mitochondrial membrane respiratory chain NADH dehydrogenase (Complex I), that is believed not to be involved in catalysis. Complex I functions in the transfer of electrons from NADH to the respiratory chain. The immediate electron acceptor for the enzyme is believed to be ubiquinone. This chain is NADH dehydrogenase [ubiquinone] 1 beta subcomplex subunit 11, mitochondrial (NDUFB11), found in Homo sapiens (Human).